The following is a 101-amino-acid chain: NADH-quinone oxidoreductase subunit K (101 aa).

A run of 3 helical transmembrane segments spans residues Val4–Leu24, Ile29–Ala49, and Val61–Val81.

This sequence belongs to the complex I subunit 4L family. In terms of assembly, NDH-1 is composed of 14 different subunits. Subunits NuoA, H, J, K, L, M, N constitute the membrane sector of the complex.

The protein localises to the cell inner membrane. The enzyme catalyses a quinone + NADH + 5 H(+)(in) = a quinol + NAD(+) + 4 H(+)(out). In terms of biological role, NDH-1 shuttles electrons from NADH, via FMN and iron-sulfur (Fe-S) centers, to quinones in the respiratory chain. The immediate electron acceptor for the enzyme in this species is believed to be ubiquinone. Couples the redox reaction to proton translocation (for every two electrons transferred, four hydrogen ions are translocated across the cytoplasmic membrane), and thus conserves the redox energy in a proton gradient. In Legionella pneumophila (strain Paris), this protein is NADH-quinone oxidoreductase subunit K.